The sequence spans 320 residues: MPTGDFDSKPSWADQVEEEGEDDKCVTSELLKGIPLPTGDTSPEPELLPGDPLPPPKEVINGNIKTVTEYKVEEDGKKFKIVRTFRIETRKASKAVARRKNWKKFGNSEFDPPGPNVATTTVSDDVSMTFITSKEDLNCQEEEDPMNKLKGQKIVSCRICKGDHWTTRCPYKDTLGPMQKELAEQLGLSTGEKEKLPGELEPVQAAQNKTGKYVPPSLRDGASRRGESMQPNRRADDNATIRVTNLSEDTRETDLQELFRPFGSISRIYLAKDKTTGQSKGFAFISFHRREDAARAIAGVSGFGYDHLILNVEWAKPSTN.

A disordered region spans residues 1–60; the sequence is MPTGDFDSKPSWADQVEEEGEDDKCVTSELLKGIPLPTGDTSPEPELLPGDPLPPPKEVI. 2 positions are modified to phosphoserine: Ser8 and Ser11. Residues Thr38 and Thr41 each carry the phosphothreonine modification. A phosphoserine mark is found at Ser42, Ser189, Ser223, and Ser264. Positions 205 to 233 are disordered; that stretch reads AAQNKTGKYVPPSLRDGASRRGESMQPNR. The span at 221–233 shows a compositional bias: basic and acidic residues; sequence GASRRGESMQPNR. The RRM domain occupies 239-317; that stretch reads ATIRVTNLSE…LILNVEWAKP (79 aa).

This sequence belongs to the eIF-3 subunit G family. In terms of assembly, component of the eukaryotic translation initiation factor 3 (eIF-3) complex, which is composed of 13 subunits: EIF3A, EIF3B, EIF3C, EIF3D, EIF3E, EIF3F, EIF3G, EIF3H, EIF3I, EIF3J, EIF3K, EIF3L and EIF3M. The eIF-3 complex appears to include 3 stable modules: module A is composed of EIF3A, EIF3B, EIF3G and EIF3I; module B is composed of EIF3F, EIF3H, and EIF3M; and module C is composed of EIF3C, EIF3D, EIF3E, EIF3K and EIF3L. EIF3C of module C binds EIF3B of module A and EIF3H of module B, thereby linking the three modules. EIF3J is a labile subunit that binds to the eIF-3 complex via EIF3B. The eIF-3 complex interacts with RPS6KB1 under conditions of nutrient depletion. Mitogenic stimulation leads to binding and activation of a complex composed of MTOR and RPTOR, leading to phosphorylation and release of RPS6KB1 and binding of EIF4B to eIF-3. Interacts (via C-terminus) with AIFM1 (via N-terminus). Interacts with DHX33; the interaction is independent of RNA. Phosphorylated. Phosphorylation is enhanced upon serum stimulation.

It is found in the cytoplasm. The protein localises to the nucleus. Its subcellular location is the perinuclear region. RNA-binding component of the eukaryotic translation initiation factor 3 (eIF-3) complex, which is required for several steps in the initiation of protein synthesis. The eIF-3 complex associates with the 40S ribosome and facilitates the recruitment of eIF-1, eIF-1A, eIF-2:GTP:methionyl-tRNAi and eIF-5 to form the 43S pre-initiation complex (43S PIC). The eIF-3 complex stimulates mRNA recruitment to the 43S PIC and scanning of the mRNA for AUG recognition. The eIF-3 complex is also required for disassembly and recycling of post-termination ribosomal complexes and subsequently prevents premature joining of the 40S and 60S ribosomal subunits prior to initiation. The eIF-3 complex specifically targets and initiates translation of a subset of mRNAs involved in cell proliferation, including cell cycling, differentiation and apoptosis, and uses different modes of RNA stem-loop binding to exert either translational activation or repression. This subunit can bind 18S rRNA. The chain is Eukaryotic translation initiation factor 3 subunit G (Eif3g) from Rattus norvegicus (Rat).